Reading from the N-terminus, the 212-residue chain is Uracil-DNA glycosylase (212 aa).

Asp-59 serves as the catalytic Proton acceptor.

Belongs to the uracil-DNA glycosylase (UDG) superfamily. UNG family.

It localises to the cytoplasm. The enzyme catalyses Hydrolyzes single-stranded DNA or mismatched double-stranded DNA and polynucleotides, releasing free uracil.. Excises uracil residues from the DNA which can arise as a result of misincorporation of dUMP residues by DNA polymerase or due to deamination of cytosine. This Ureaplasma urealyticum serovar 10 (strain ATCC 33699 / Western) protein is Uracil-DNA glycosylase.